Reading from the N-terminus, the 604-residue chain is Ectonucleoside triphosphate diphosphohydrolase 7 (604 aa).

Topologically, residues 1–28 (MARISFSYLCPASWYFTVPTVSPFLRQR) are cytoplasmic. Residues 29 to 49 (VAFLGLFFISCLLLLMLIIDF) traverse the membrane as a helical segment. The Vesicular portion of the chain corresponds to 50–546 (RHWSASLPRD…QAHGSWFRLS (497 aa)). Residue Glu217 is the Proton acceptor of the active site. N-linked (GlcNAc...) asparagine glycosylation occurs at Asn330. Residues Cys448 and Cys477 are joined by a disulfide bond. Residues 547-567 (FVYNHYLFFACILVVLLAIFL) traverse the membrane as a helical segment. The Cytoplasmic portion of the chain corresponds to 568–604 (YLLRLRRIHHRQTRASAPLDLLWLEEVVPMMGVQVGP).

Belongs to the GDA1/CD39 NTPase family. It depends on Ca(2+) as a cofactor. Mg(2+) is required as a cofactor.

Its subcellular location is the cytoplasmic vesicle membrane. It carries out the reaction a ribonucleoside 5'-triphosphate + H2O = a ribonucleoside 5'-diphosphate + phosphate + H(+). The catalysed reaction is UTP + H2O = UDP + phosphate + H(+). It catalyses the reaction GTP + H2O = GDP + phosphate + H(+). The enzyme catalyses CTP + H2O = CDP + phosphate + H(+). Functionally, catalyzes the hydrolysis of nucleoside triphosphates and diphosphates in a calcium- or magnesium-dependent manner. Preferentially hydrolyzes nucleoside 5'-triphosphates, with substrate preference for UTP &gt; GTP &gt; CTP. Hydrolyzes ATP and nucleoside diphosphates only to a minor extent. This Homo sapiens (Human) protein is Ectonucleoside triphosphate diphosphohydrolase 7 (ENTPD7).